Reading from the N-terminus, the 77-residue chain is Acyl carrier protein (77 aa).

The region spanning 1–76 is the Carrier domain; it reads MAVFEDVRDV…DVVNYIEKLG (76 aa). Residue Ser36 is modified to O-(pantetheine 4'-phosphoryl)serine.

It belongs to the acyl carrier protein (ACP) family. 4'-phosphopantetheine is transferred from CoA to a specific serine of apo-ACP by AcpS. This modification is essential for activity because fatty acids are bound in thioester linkage to the sulfhydryl of the prosthetic group.

The protein localises to the cytoplasm. It functions in the pathway lipid metabolism; fatty acid biosynthesis. Its function is as follows. Carrier of the growing fatty acid chain in fatty acid biosynthesis. The chain is Acyl carrier protein from Campylobacter concisus (strain 13826).